We begin with the raw amino-acid sequence, 140 residues long: Pro-variola growth factor (140 aa).

The N-terminal stretch at 1-18 (MSMKYLMLLFAAMIIRSF) is a signal peptide. The Extracellular segment spans residues 19–100 (ANSGNAIETT…SEKPNTTTSY (82 aa)). N34 carries an N-linked (GlcNAc...) asparagine; by host glycan. Residues 41–81 (AIRLCGPEGDRYCFHGICIHARDIDGMYCRCSHGYTGIRCQ) form the EGF-like domain. Disulfide bonds link C45–C58, C53–C69, and C71–C80. N95 carries an N-linked (GlcNAc...) asparagine; by host glycan. Residues 101-121 (IPSPGIVLVLLVSIIVCCLLF) traverse the membrane as a helical segment. Residues 122–140 (VYRFTRRTNKLPLQDMVVP) lie on the Cytoplasmic side of the membrane.

This sequence belongs to the orthopoxvirus OPG019 family. In terms of assembly, variola growth factor interacts with host EGFR and promotes EGFR dimerization.

It localises to the host membrane. The protein localises to the secreted. Functionally, stimulates cellular proliferation (hyperplasia)and mobility around infected cells to promote rapid and efficient spread of infection. This effect is beneficial for virus replication in vivo, because poxviruses replicate possibly better in proliferating cells than in quiescent cells. Acts by binding host EGFR, inducing its dimerization, autophosphorylation and leading to activation of several cellular pathways regulating cell proliferation or cell survival. The activation by host EGFR of mitogen activated protein kinases (MAPK) and extracellular-signal regulated kinases (ERK) are essential for the positive effect of vaccinia growth factor on poxvirus virulence in vivo. This is Pro-variola growth factor (OPG019) from Variola virus (isolate Human/India/Ind3/1967) (VARV).